The following is a 552-amino-acid chain: Macrophage colony-stimulating factor 1 (552 aa).

The first 32 residues, 1–32 (MTARGAAGRCPSSTWLGSRLLLVCLLMSRSIA), serve as a signal peptide directing secretion. Residues 33–492 (KEVSEHCSHM…EGSSDPQIPE (460 aa)) are Extracellular-facing. Cystine bridges form between Cys39-Cys122, Cys80-Cys171, and Cys134-Cys178. Residues Asn107, Asn154, and Asn172 are each glycosylated (N-linked (GlcNAc...) asparagine). Residues 197 to 207 (TPSSDPASASP) show a composition bias toward low complexity. The interval 197–293 (TPSSDPASAS…GGPVPGVEDI (97 aa)) is disordered. Residues 254–267 (PRSTCQTLESTEQP) show a composition bias toward polar residues. The segment covering 268 to 278 (NHGDRLTEDSQ) has biased composition (basic and acidic residues). The O-linked (Xyl...) (chondroitin sulfate) serine glycan is linked to Ser308. Disordered stretches follow at residues 321-412 (KFSP…RVSN) and 439-465 (GKRSTRDRRSPAELEGGSASEGAARPV). Basic and acidic residues-rich tracts occupy residues 350–364 (STEDQKPVDITDRPL), 382–396 (EKTDGTSTLREDHQE), and 439–450 (GKRSTRDRRSPA). An O-linked (GalNAc...) threonine glycan is attached at Thr360. A helical membrane pass occupies residues 493 to 515 (SVFHLLVPGIILVLLTVGGLLFY). Residues 516–552 (KWKWRSHRDPQTLDSSVGRPEDSSLTQDEDRQVELPV) lie on the Cytoplasmic side of the membrane. A disordered region spans residues 525–552 (PQTLDSSVGRPEDSSLTQDEDRQVELPV). Basic and acidic residues predominate over residues 543-552 (DEDRQVELPV).

As to quaternary structure, homodimer or heterodimer; disulfide-linked. Likely to exist in multiple forms: homodimer consisting of 2 identical 150-200 kDa proteoglycan subunits, heterodimer consisting of a 150-200 kDa proteoglycan subunit and a truncated 43 kDa subunit, and homodimer consisting of 2 identical 43 kDa subunits. Interacts with CSF1R. In terms of processing, N-glycosylated. O-glycosylated; contains chondroitin sulfate.

The protein resides in the cell membrane. It localises to the secreted. The protein localises to the extracellular space. In terms of biological role, cytokine that plays an essential role in the regulation of survival, proliferation and differentiation of hematopoietic precursor cells, especially mononuclear phagocytes, such as macrophages and monocytes. Promotes the release of pro-inflammatory chemokines, and thereby plays an important role in innate immunity and in inflammatory processes. Plays an important role in the regulation of osteoclast proliferation and differentiation, the regulation of bone resorption, and is required for normal bone development. Required for normal male and female fertility. Promotes reorganization of the actin cytoskeleton, regulates formation of membrane ruffles, cell adhesion and cell migration. Plays a role in lipoprotein clearance. The polypeptide is Macrophage colony-stimulating factor 1 (Csf1) (Mus musculus (Mouse)).